The primary structure comprises 69 residues: MKKIMLFLAMTSILSACQPNYTGKYIEIGDTLTDYTKECFKENEIPYKYEKGKLYIPEDAFDTAIYTCS.

Residues 1–16 (MKKIMLFLAMTSILSA) form the signal peptide. C17 carries the N-palmitoyl cysteine lipid modification. C17 carries S-diacylglycerol cysteine lipidation.

It localises to the cell membrane. This is an uncharacterized protein from Bacillus subtilis (strain 168).